Here is a 1192-residue protein sequence, read N- to C-terminus: Protein FAM83H (1192 aa).

Disordered stretches follow at residues 435–542 (EGMG…VKQG), 557–661 (DGGE…LAEP), 695–720 (SKLE…ESEP), 737–1082 (LSRE…SNII), and 1094–1145 (ILEQ…ERDN). Residues 437–447 (MGHDDRGHYDR) are compositionally biased toward basic and acidic residues. Polar residues-rich tracts occupy residues 523-538 (QLFS…QDPS) and 629-652 (SDLG…ASST). Composition is skewed to basic and acidic residues over residues 737-759 (LSRE…KHAS) and 768-789 (DTKE…EENK). The span at 790–810 (VTQPTVPSASQQITSSLNMND) shows a compositional bias: polar residues. Over residues 820-834 (DQQEKRKTSKLELDL) the composition is skewed to basic and acidic residues. Over residues 861 to 878 (TSEQSTVKAQEPTVSQTD) the composition is skewed to polar residues. Basic and acidic residues-rich tracts occupy residues 880-892 (VPHR…KPKP) and 914-925 (APKKEPVKEPTK). Over residues 926–946 (SLKPFPSPKFLKPFKSSQSSS) the composition is skewed to low complexity. Positions 994 to 1005 (ESKDTKALDFLK) are enriched in basic and acidic residues. A compositionally biased stretch (polar residues) spans 1068-1082 (KPTTSRYQSSTSNII). The segment covering 1107-1122 (QQNEESGKGDGGKDDV) has biased composition (basic and acidic residues).

This sequence belongs to the FAM83 family.

The protein resides in the cytoplasm. It is found in the cytoskeleton. In terms of biological role, may play a role in keratin cytoskeleton disassembly. In Danio rerio (Zebrafish), this protein is Protein FAM83H.